Here is a 216-residue protein sequence, read N- to C-terminus: Probable Golgi SNAP receptor complex member 2 (216 aa).

The Cytoplasmic portion of the chain corresponds to 1 to 194 (MESLYHQTNN…IERRLVEDRR (194 aa)). The stretch at 62 to 103 (QRQSSKLRVDQLKYDLRHLQTSLQTARERRQRRMQEISEREQ) forms a coiled coil. A helical; Anchor for type IV membrane protein transmembrane segment spans residues 195–215 (IFIGGVVVTLLIIALIIYFLV). A topological domain (vesicular) is located at residue Leu-216.

It belongs to the GOSR2 family. In terms of assembly, part of a unique SNARE complex.

The protein localises to the golgi apparatus. It is found in the cis-Golgi network membrane. The protein resides in the golgi apparatus membrane. It localises to the endoplasmic reticulum membrane. Its function is as follows. Involved in transport of proteins from the cis/medial-Golgi to the trans-Golgi network. This is Probable Golgi SNAP receptor complex member 2 from Drosophila melanogaster (Fruit fly).